Reading from the N-terminus, the 181-residue chain is Translationally-controlled tumor protein homolog (181 aa).

A TCTP domain is found at 1-181 (MLIYKDIFTD…VKEAIIEEKC (181 aa)).

Belongs to the TCTP family.

The protein resides in the cytoplasm. Functionally, involved in calcium binding and microtubule stabilization. The chain is Translationally-controlled tumor protein homolog (tct-1) from Caenorhabditis elegans.